A 627-amino-acid chain; its full sequence is MLRLESLIVTVWGPATLLARKAPLGQIWMAATLHAKINRKKLDKLDIIQICEEILNPSVPMALRLSGILMGGVVIVYERKVKLLFDDVNRFLVEINGAWRTKSVPDPTLLPKGKTHARKEAVTLPENEEADFGDFEQTRNVPKFGNYMDFQQTFISMRLDESHVNNNPEPEDLGQQFHQADAENITLFEYHGSFQTNNETYDRFERFDIEGDDETQMNSNPREGAEIPTTLIPSPPRHHDIPEGVNPTSPQRQEQQENRRDGFAEQMEEQNIPDKEEHDRPQPAKKRARKTATSAMDYEQTIIAGHVYQSWLQDTSDILCRGEKRKVRGTIRPDMESFKRANMPPTQLFEKDSSYPPQLYQLWSKNTQVLQTSSSESRHPDLRAEQSPGFVQERMHNHHQTDHHERSDTSSQNLDSPAEILRTVRTGKGASVESMMAGSRASPETINRQAADINVTPFYSGDDVRSMPSTPSARGAASINNIEISSKSRMPNRKRPNSSPRRGLEPVAEERPWEHREYEFEFSMLPEKRFTADKEILFETASTQTQKPVCNQSDEMITDSIKSHLKTHFETPGAPQVESLNKLAVGMDRNAAAKLFFQSCVLATRGVIKVNQAEPYGDILIARGPNM.

3 disordered regions span residues 211–294 (GDDE…TATS), 395–416 (MHNH…NLDS), and 461–510 (GDDV…VAEE). Basic and acidic residues-rich tracts occupy residues 254 to 263 (EQQENRRDGF), 272 to 282 (IPDKEEHDRPQ), and 395 to 408 (MHNH…ERSD). A compositionally biased stretch (polar residues) spans 467–487 (MPSTPSARGAASINNIEISSK).

This sequence belongs to the rad21 family. As to quaternary structure, component of the cohesin complex. As to expression, isoform 2 is expressed at low levels in buds, leaves and roots, whereas expression of isoform 1 is confined to buds.

Its subcellular location is the nucleus. Involved in chromosome condensation, pairing and segregation during meiosis. Responsible for cohesion between replicated sister chromatids. The protein is Sister chromatid cohesion 1 protein 1 (SYN1) of Arabidopsis thaliana (Mouse-ear cress).